The sequence spans 433 residues: Alpha-(1-&gt;3)-arabinofuranosyltransferase (433 aa).

The next 10 helical transmembrane spans lie at 118-138 (LFIS…LRMF), 140-160 (FTLT…TETV), 164-184 (LVFT…LRWL), 197-217 (LAIG…LLPL), 224-244 (ALVA…PLVS), 280-300 (WLIL…LWLL), 310-330 (LFWF…VMSL), 333-353 (GYYS…NSVI), 356-376 (WPAW…LFNW), and 385-405 (YLKI…VLYF).

Belongs to the glycosyltransferase 87 family.

The protein localises to the cell membrane. The catalysed reaction is Adds an alpha-D-arabinofuranosyl group from trans,octacis-decaprenylphospho-beta-D-arabinofuranose at the 3-O-position of an alpha-(1-&gt;5)-arabinofuranan chain attached to a beta-(1-&gt;5)-galactofuranan chain.. Its pathway is cell wall biogenesis; cell wall polysaccharide biosynthesis. Involved in the biosynthesis of the arabinogalactan (AG) region of the mycolylarabinogalactan-peptidoglycan (mAGP) complex, an essential component of the mycobacterial cell wall. Catalyzes the addition of an arabinofuranosyl (Araf) residue from the sugar donor beta-D-arabinofuranosyl-1-monophosphoryldecaprenol (DPA) on the C-3 of an alpha-(1-&gt;5)-linked Araf from the arabinan backbone of AG. This chain is Alpha-(1-&gt;3)-arabinofuranosyltransferase (aftC), found in Mycobacterium tuberculosis (strain CDC 1551 / Oshkosh).